A 56-amino-acid polypeptide reads, in one-letter code: Large ribosomal subunit protein bL32 (56 aa).

The protein belongs to the bacterial ribosomal protein bL32 family.

The protein is Large ribosomal subunit protein bL32 of Edwardsiella ictaluri (strain 93-146).